Here is an 843-residue protein sequence, read N- to C-terminus: Translation initiation factor IF-2 (843 aa).

Disordered stretches follow at residues 55–185 (AEAV…EDRD) and 209–228 (KVEE…QVKV). Positions 62–106 (PQEKPKKSAPKKEEKPKEEVKKEAEEKVAASKKEEEKPQEKKSVE) are enriched in basic and acidic residues. Residues 114–128 (LKKRRGLVIVKKKRP) show a composition bias toward basic residues. The segment covering 129 to 141 (KVEPKVEEKEAKQ) has biased composition (basic and acidic residues). Positions 156 to 165 (LKRKPKKAKK) are enriched in basic residues. Composition is skewed to basic and acidic residues over residues 171–185 (KKNE…EDRD) and 209–221 (KVEE…EPQK). The region spanning 342 to 511 (ERPPVITIMG…LLQAEIMELK (170 aa)) is the tr-type G domain. Residues 351–358 (GHVDHGKT) are G1. GTP is bound at residue 351 to 358 (GHVDHGKT). A G2 region spans residues 376–380 (GITQH). The G3 stretch occupies residues 397-400 (DTPG). Residues 397-401 (DTPGH) and 451-454 (NKID) contribute to the GTP site. Residues 451 to 454 (NKID) form a G4 region. Positions 487–489 (SAK) are G5.

The protein belongs to the TRAFAC class translation factor GTPase superfamily. Classic translation factor GTPase family. IF-2 subfamily.

Its subcellular location is the cytoplasm. In terms of biological role, one of the essential components for the initiation of protein synthesis. Protects formylmethionyl-tRNA from spontaneous hydrolysis and promotes its binding to the 30S ribosomal subunits. Also involved in the hydrolysis of GTP during the formation of the 70S ribosomal complex. The polypeptide is Translation initiation factor IF-2 (Nitratiruptor sp. (strain SB155-2)).